We begin with the raw amino-acid sequence, 392 residues long: Phosphoglycerate kinase (392 aa).

Substrate-binding positions include 21-23, Arg-36, 59-62, Arg-114, and Arg-147; these read DMN and HLGR. ATP contacts are provided by residues Lys-198, Glu-320, and 346–349; that span reads GGDT.

Belongs to the phosphoglycerate kinase family. Monomer.

It localises to the cytoplasm. The enzyme catalyses (2R)-3-phosphoglycerate + ATP = (2R)-3-phospho-glyceroyl phosphate + ADP. It participates in carbohydrate degradation; glycolysis; pyruvate from D-glyceraldehyde 3-phosphate: step 2/5. The polypeptide is Phosphoglycerate kinase (Neisseria meningitidis serogroup C / serotype 2a (strain ATCC 700532 / DSM 15464 / FAM18)).